Consider the following 311-residue polypeptide: T-cell acute lymphocytic leukemia protein 1 homolog (311 aa).

Positions Met1–Ser14 are enriched in pro residues. Residues Met1 to Ala67 are disordered. Over residues Asp15 to Glu25 the composition is skewed to basic and acidic residues. The 53-residue stretch at Val179–Leu231 folds into the bHLH domain. The tract at residues Ser265–Arg311 is disordered. Residues Thr284 to His294 are compositionally biased toward basic and acidic residues.

As to quaternary structure, efficient DNA binding requires dimerization with another bHLH protein. Forms heterodimers with TCF3. Phosphorylated on serine residues.

Its subcellular location is the nucleus. Functionally, implicated in the genesis of hemopoietic malignancies. It may play an important role in hemopoietic differentiation. This Gallus gallus (Chicken) protein is T-cell acute lymphocytic leukemia protein 1 homolog (TAL1).